A 557-amino-acid polypeptide reads, in one-letter code: Polypyrimidine tract-binding protein 1 (557 aa).

Met-1 is subject to N-acetylmethionine. A Phosphoserine modification is found at Ser-16. RRM domains follow at residues 59–143 (RVIH…SSPN), 184–260 (LRII…FSKL), and 363–437 (SVLL…LSKH). Lys-65 participates in a covalent cross-link: Glycyl lysine isopeptide (Lys-Gly) (interchain with G-Cter in SUMO2). Tyr-127 carries the post-translational modification Phosphotyrosine. The residue at position 138 (Thr-138) is a Phosphothreonine. Residue Ser-141 is modified to Phosphoserine. Lys-218 participates in a covalent cross-link: Glycyl lysine isopeptide (Lys-Gly) (interchain with G-Cter in SUMO2). Position 459 is a phosphoserine (Ser-459). In terms of domain architecture, RRM 4 spans 480–555 (ATLHLSNIPP…HHLRVSFSKS (76 aa)).

As to quaternary structure, monomer. Part of a ternary complex containing KHSRP, PTBP1, PTBP2 and HNRPH1. Interacts with RAVER1 and SFPQ.

It is found in the nucleus. Functionally, plays a role in pre-mRNA splicing and in the regulation of alternative splicing events. Activates exon skipping of its own pre-mRNA during muscle cell differentiation. Binds to the polypyrimidine tract of introns. May promote RNA looping when bound to two separate polypyrimidine tracts in the same pre-mRNA. May promote the binding of U2 snRNP to pre-mRNA. Cooperates with RAVER1 to modulate switching between mutually exclusive exons during maturation of the TPM1 pre-mRNA. Represses the splicing of MAPT/Tau exon 10. Binds to polypyrimidine-rich controlling element (PCE) of CFTR and promotes exon skipping of CFTR exon 9, thereby antagonizing TIA1 and its role in exon inclusion of CFTR exon 9. Plays a role in the splicing of pyruvate kinase PKM by binding repressively to a polypyrimidine tract flanking PKM exon 9, inhibiting exon 9 inclusion and resulting in exon 10 inclusion and production of the PKM M2 isoform. In Sus scrofa (Pig), this protein is Polypyrimidine tract-binding protein 1 (PTBP1).